The primary structure comprises 2531 residues: Highly reducing polyketide synthase ausV (2531 aa).

A Ketosynthase family 3 (KS3) domain is found at 7–432; the sequence is STPIAIIGLS…GTNAHCVMET (426 aa). Active-site for beta-ketoacyl synthase activity residues include Cys-180, His-315, and His-355. The segment at 554–882 is malonyl-CoA:ACP transacylase (MAT) domain; the sequence is FVFTGQGAQW…HHTLLESMGS (329 aa). Ser-644 (for malonyltransferase activity) is an active-site residue. Residues 939–1069 are N-terminal hotdog fold; that stretch reads HDLCGIRVED…GSVLAGTPSD (131 aa). The PKS/mFAS DH domain occupies 939-1238; it reads HDLCGIRVED…LATLSVRSGD (300 aa). The tract at residues 940-1236 is dehydratase (DH) domain; the sequence is DLCGIRVEDD…LELATLSVRS (297 aa). The active-site Proton acceptor; for dehydratase activity is the His-971. Residues 1087 to 1238 are C-terminal hotdog fold; that stretch reads YVETTPRQAY…LATLSVRSGD (152 aa). The active-site Proton donor; for dehydratase activity is Asp-1152. Positions 1414–1592 are methyltransferase (CMet) domain; it reads SSYLRLHARN…DTGFSGVDIS (179 aa). The segment at 1832–2133 is enoyl reductase (ER) domain; that stretch reads LRFVQDPAYW…SGGAKPGCSR (302 aa). Positions 2156–2331 are ketoreductase (KR) domain; that stretch reads HGRALVPDFH…AGVSLSLGFI (176 aa). In terms of domain architecture, Carrier spans 2444-2521; it reads AAATAVLDAL…ELARDLALRS (78 aa). The residue at position 2481 (Ser-2481) is an O-(pantetheine 4'-phosphoryl)serine.

Its pathway is secondary metabolite biosynthesis; terpenoid biosynthesis. Its function is as follows. Highly reducing polyketide synthase; part of the gene cluster that mediates the biosynthesis of calidodehydroaustin, a fungal meroterpenoid. The first step of the pathway is the synthesis of 3,5-dimethylorsellinic acid by the polyketide synthase ausA. 3,5-dimethylorsellinic acid is then prenylated by the polyprenyl transferase ausN. Further epoxidation by the FAD-dependent monooxygenase ausM and cyclization by the probable terpene cyclase ausL lead to the formation of protoaustinoid A. Protoaustinoid A is then oxidized to spiro-lactone preaustinoid A3 by the combined action of the FAD-binding monooxygenases ausB and ausC, and the dioxygenase ausE. Acid-catalyzed keto-rearrangement and ring contraction of the tetraketide portion of preaustinoid A3 by ausJ lead to the formation of preaustinoid A4. The aldo-keto reductase ausK, with the help of ausH, is involved in the next step by transforming preaustinoid A4 into isoaustinone which is in turn hydroxylated by the P450 monooxygenase ausI to form austinolide. The cytochrome P450 monooxygenase ausG modifies austinolide to austinol. Austinol is further acetylated to austin by the O-acetyltransferase ausP, which spontaneously changes to dehydroaustin. The cytochrome P450 monooxygenase ausR then converts dehydroaustin is into 7-dehydrodehydroaustin. The hydroxylation catalyzed by ausR permits the O-acetyltransferase ausQ to add an additional acetyl group to the molecule, leading to the formation of acetoxydehydroaustin. The short chain dehydrogenase ausT catalyzes the reduction of the double bond present between carbon atoms 1 and 2 to convert 7-dehydrodehydroaustin into 1,2-dihydro-7-hydroxydehydroaustin. AusQ catalyzes not only an acetylation reaction but also the addition of the PKS ausV diketide product to 1,2-dihydro-7-hydroxydehydroaustin, forming precalidodehydroaustin. Finally, the iron/alpha-ketoglutarate-dependent dioxygenase converts precalidodehydroaustin into calidodehydroaustin. The sequence is that of Highly reducing polyketide synthase ausV from Aspergillus calidoustus.